The following is a 367-amino-acid chain: Glutamate 5-kinase (367 aa).

Lysine 9 serves as a coordination point for ATP. Substrate is bound by residues serine 49, aspartate 136, and asparagine 148. ATP-binding positions include 168–169 (TD) and 210–216 (TGGMKSK). In terms of domain architecture, PUA spans 276–350 (SGQIEIDAGA…GMQSQQIQAR (75 aa)).

The protein belongs to the glutamate 5-kinase family.

The protein localises to the cytoplasm. The catalysed reaction is L-glutamate + ATP = L-glutamyl 5-phosphate + ADP. It functions in the pathway amino-acid biosynthesis; L-proline biosynthesis; L-glutamate 5-semialdehyde from L-glutamate: step 1/2. In terms of biological role, catalyzes the transfer of a phosphate group to glutamate to form L-glutamate 5-phosphate. In Bacillus anthracis, this protein is Glutamate 5-kinase.